Reading from the N-terminus, the 375-residue chain is Probable trehalose-phosphate phosphatase 7 (375 aa).

The protein belongs to the trehalose phosphatase family. Requires a divalent metal cation as cofactor.

It catalyses the reaction alpha,alpha-trehalose 6-phosphate + H2O = alpha,alpha-trehalose + phosphate. The protein operates within glycan biosynthesis; trehalose biosynthesis. Its function is as follows. Removes the phosphate from trehalose 6-phosphate to produce free trehalose. Trehalose accumulation in plant may improve abiotic stress tolerance. The protein is Probable trehalose-phosphate phosphatase 7 (TPP7) of Oryza sativa subsp. japonica (Rice).